Here is a 221-residue protein sequence, read N- to C-terminus: Lipoprotein-releasing system ATP-binding protein LolD (221 aa).

One can recognise an ABC transporter domain in the interval 6–220 (LILKKISKHY…YNLKNGLLNI (215 aa)). Residue 42–49 (GSSGSGKS) coordinates ATP.

This sequence belongs to the ABC transporter superfamily. Lipoprotein translocase (TC 3.A.1.125) family. The complex is composed of two ATP-binding proteins (LolD) and two transmembrane proteins (LolC and LolE).

The protein resides in the cell inner membrane. Functionally, part of the ABC transporter complex LolCDE involved in the translocation of mature outer membrane-directed lipoproteins, from the inner membrane to the periplasmic chaperone, LolA. Responsible for the formation of the LolA-lipoprotein complex in an ATP-dependent manner. The sequence is that of Lipoprotein-releasing system ATP-binding protein LolD from Rickettsia typhi (strain ATCC VR-144 / Wilmington).